Reading from the N-terminus, the 277-residue chain is NH(3)-dependent NAD(+) synthetase (277 aa).

36 to 43 (GLSGGIDS) provides a ligand contact to ATP. Asp42 is a binding site for Mg(2+). Deamido-NAD(+) is bound at residue Arg118. An ATP-binding site is contributed by Thr138. Glu143 contacts Mg(2+). Positions 167 and 189 each coordinate ATP.

It belongs to the NAD synthetase family. Homodimer.

It carries out the reaction deamido-NAD(+) + NH4(+) + ATP = AMP + diphosphate + NAD(+) + H(+). It functions in the pathway cofactor biosynthesis; NAD(+) biosynthesis; NAD(+) from deamido-NAD(+) (ammonia route): step 1/1. Catalyzes the ATP-dependent amidation of deamido-NAD to form NAD. Uses ammonia as a nitrogen source. This is NH(3)-dependent NAD(+) synthetase from Chlorobaculum parvum (strain DSM 263 / NCIMB 8327) (Chlorobium vibrioforme subsp. thiosulfatophilum).